A 450-amino-acid chain; its full sequence is Probable ECA polymerase (450 aa).

Helical transmembrane passes span 6–26 (FSGL…LTWF), 37–57 (VFFS…TSVL), 63–83 (VGVA…CFYA), 118–138 (VILM…NGFL), 155–175 (GVAL…VYFL), 181–201 (AWLF…MIVG), 207–227 (IIIA…ISLW), 228–248 (MLAA…LKRY), 341–361 (LVVM…GLII), 378–398 (YKAA…IVLA), and 410–430 (VFFI…YWLF).

It belongs to the WzyE family. Probably part of a complex composed of WzxE, WzyE and WzzE.

Its subcellular location is the cell inner membrane. Its pathway is bacterial outer membrane biogenesis; enterobacterial common antigen biosynthesis. In terms of biological role, probably involved in the polymerization of enterobacterial common antigen (ECA) trisaccharide repeat units. This Escherichia coli O127:H6 (strain E2348/69 / EPEC) protein is Probable ECA polymerase.